The primary structure comprises 151 residues: Large ribosomal subunit protein uL15 (151 aa).

Positions 1–45 (MNLSSLKPVKGSTKTCKRVGRGQGSGCGGTSTRGHKGQKSRSGYS) are disordered. Residues 21–31 (RGQGSGCGGTS) are compositionally biased toward gly residues.

The protein belongs to the universal ribosomal protein uL15 family. As to quaternary structure, part of the 50S ribosomal subunit.

Binds to the 23S rRNA. In Azobacteroides pseudotrichonymphae genomovar. CFP2, this protein is Large ribosomal subunit protein uL15.